Consider the following 154-residue polypeptide: Nitrogen regulatory protein (154 aa).

The region spanning 6–150 (QILTPGRSLV…EALYQIVVDV (145 aa)) is the PTS EIIA type-2 domain. The Tele-phosphohistidine intermediate role is filled by His-68.

It localises to the cytoplasm. Seems to have a role in regulating nitrogen assimilation. This is Nitrogen regulatory protein (ptsN) from Pseudomonas aeruginosa (strain ATCC 15692 / DSM 22644 / CIP 104116 / JCM 14847 / LMG 12228 / 1C / PRS 101 / PAO1).